Reading from the N-terminus, the 614-residue chain is UvrABC system protein C (614 aa).

The GIY-YIG domain occupies 20–98 (TAPGVYRMYA…IKSLSPRYNV (79 aa)). Residues 207 to 242 (DELTRELGEQMQAASEALEFEQAARLRDLISSLRSM) enclose the UVR domain.

Belongs to the UvrC family. In terms of assembly, interacts with UvrB in an incision complex.

The protein localises to the cytoplasm. In terms of biological role, the UvrABC repair system catalyzes the recognition and processing of DNA lesions. UvrC both incises the 5' and 3' sides of the lesion. The N-terminal half is responsible for the 3' incision and the C-terminal half is responsible for the 5' incision. In Stenotrophomonas maltophilia (strain K279a), this protein is UvrABC system protein C.